The chain runs to 315 residues: Cobalamin biosynthesis protein CobD (315 aa).

A run of 7 helical transmembrane segments spans residues 1 to 21 (MLDI…YWFP), 50 to 70 (VFGG…PFII), 79 to 99 (VIYH…KSLH), 151 to 171 (DGII…AMMY), 209 to 229 (VTGI…FYSI), 250 to 270 (AAAA…GEVV), and 291 to 311 (IILM…IICF).

It belongs to the CobD/CbiB family.

It is found in the cell membrane. It participates in cofactor biosynthesis; adenosylcobalamin biosynthesis. Functionally, converts cobyric acid to cobinamide by the addition of aminopropanol on the F carboxylic group. The chain is Cobalamin biosynthesis protein CobD from Clostridium acetobutylicum (strain ATCC 824 / DSM 792 / JCM 1419 / IAM 19013 / LMG 5710 / NBRC 13948 / NRRL B-527 / VKM B-1787 / 2291 / W).